A 356-amino-acid chain; its full sequence is Protein RecA (356 aa).

Gly78–Thr85 is an ATP binding site.

The protein belongs to the RecA family.

The protein localises to the cytoplasm. In terms of biological role, can catalyze the hydrolysis of ATP in the presence of single-stranded DNA, the ATP-dependent uptake of single-stranded DNA by duplex DNA, and the ATP-dependent hybridization of homologous single-stranded DNAs. It interacts with LexA causing its activation and leading to its autocatalytic cleavage. The sequence is that of Protein RecA from Paracoccus denitrificans.